An 802-amino-acid polypeptide reads, in one-letter code: MQVIITSSHRFFCHHLHQLKSPTSLSAQKAEFKKHGPRNWLFQTEGSLLYKPVRLNCATSDASYLGNVNEYLESDHSKNSEEKDIQVSRTIQMKGLTEEIKHMLNSMEDGRLNVLAYDTAWVSFIPNTTNNGNDQRPMFPSCLQWIIDNQLSDGSWGEEIVFCIYDRLLNTLVCVIALTLWNTCLHKRNKGVMFIKENLSKLETGEVENMTSGFELVFPTLLEKAQQLDIDIPYDAPVLKDIYARREVKLTRIPKDVIHTIPTTVLFSLEGLRDDLDWQRLLKLQMPDGSFLISPASTAFAFMETNDEKCLAYLQNVVEKSNGGARQYPFDLVTRLWAIDRLQRLGISYYFAEEFKELLNHVFRYWDEENGIFSGRNSNVSDVDDTCMAIRLLRLHGYDVSPDALNNFKDGDQFVCFRGEVDGSPTHMFNLYRCSQVLFPGEKILEEAKNFTYNFLQQCLANNRCLDKWVIAKDIPGEIWYALEFPWYASLPRVEARYYIEQYGGADDIWIGKTLYRMPDVNNNVYLQAAKLDYNRCQSQHRFEWLIMQEWFEKCNFQQFGISKKYLLVSYFLAAASIFEVEKSRERLAWAKSRIICKMITSYYNDEATTWTTRNSLLMEFKVSHDPTRKNGNETKEILVLKNLRQFLRQLSEETFEDLGKDIHHQLQNAWETWLVFLREEKNACQEETELLVRTINLSGGYMTHDEILFDADYENLSNLTNKVCGKLNELQNDKVTGGSKNTNIELDMQALVKLVFGNTSSNINQDIKQTFFAVVKTFYYSAHVSEEIMNFHISKVLFQQV.

Residues 1–24 (MQVIITSSHRFFCHHLHQLKSPTS) constitute a chloroplast transit peptide. Residue lysine 249 coordinates substrate. Mg(2+)-binding residues include aspartate 382 and aspartate 384. Positions 382–385 (DVDD) match the DXDD motif motif. A substrate-binding site is contributed by lysine 468.

It belongs to the terpene synthase family. It depends on Mg(2+) as a cofactor. Expressed specifically in the secretory cells of the glandular trichomes.

Its subcellular location is the plastid. It is found in the chloroplast. The enzyme catalyses (2E,6E,10E)-geranylgeranyl diphosphate + H2O = 8-hydroxycopalyl diphosphate. It participates in secondary metabolite biosynthesis; terpenoid biosynthesis. In terms of biological role, class-II terpene synthase that synthesizes 8-hydroxy-copalyl diphosphate. Involved in the biosynthesis of cis-abienol, a labdane diterpene that can be used as synthesis precursor of ambergris substitution fragance products. This chain is Copal-8-ol diphosphate hydratase, chloroplastic, found in Nicotiana tabacum (Common tobacco).